A 235-amino-acid polypeptide reads, in one-letter code: Cobalt transport protein CbiM (235 aa).

6 helical membrane-spanning segments follow: residues 6-26 (GVLP…FVVH), 43-63 (LLLA…LPSV), 85-105 (MAFM…HGGI), 108-128 (LGAN…GAYV), 133-153 (LGGP…LSTY), and 181-201 (IFAI…ILLF).

The protein belongs to the CbiM family. As to quaternary structure, forms an energy-coupling factor (ECF) transporter complex composed of an ATP-binding protein (A component, CbiO), a transmembrane protein (T component, CbiQ) and 2 possible substrate-capture proteins (S components, CbiM and CbiN) of unknown stoichimetry.

Its subcellular location is the cell membrane. The protein operates within cofactor biosynthesis; adenosylcobalamin biosynthesis. In terms of biological role, part of the energy-coupling factor (ECF) transporter complex CbiMNOQ involved in cobalt import. The protein is Cobalt transport protein CbiM of Propionibacterium freudenreichii subsp. shermanii (strain ATCC 9614 / DSM 4902 / CIP 103027 / NCIMB 8099 / CIRM-BIA1).